A 220-amino-acid polypeptide reads, in one-letter code: Carbonic anhydrase (220 aa).

Residues cysteine 39, aspartate 41, histidine 98, and cysteine 101 each contribute to the Zn(2+) site.

Belongs to the beta-class carbonic anhydrase family. Zn(2+) is required as a cofactor.

It catalyses the reaction hydrogencarbonate + H(+) = CO2 + H2O. This is Carbonic anhydrase (cynT) from Pseudomonas aeruginosa (strain ATCC 15692 / DSM 22644 / CIP 104116 / JCM 14847 / LMG 12228 / 1C / PRS 101 / PAO1).